The following is a 392-amino-acid chain: MDYYTILGVAKTATPEEIKKAYRKLAVKYHPDKNPGDAEAERRFKEVSEAYEVLGDAQKRESYDRYGKDGPFAGAGGFGGAGMGNMEDALRTFMGAFGGDFGGNGGGFFEGLFGGLGEAFGMRGGSEGARQGASKKVHITLSFEEAAKGVEKELLVSGYKSCDACSGSGAKTSKGVKVCDRCKGSGQVVQSRGFFSMASTCPDCSGEGRVITDPCSECRGQGRIKDKRSVHVNIPSGVDSGMRLKMEGYGDAGQNGAPAGDLYIFIDVEPHPVFERHGDDLVLELPIGFVDAALGIKKEIPTLLKEGTCRLNIPEGIQSGTVLKVRGQGFPNVHGKARGDLLVRISVETPQHLSNEQKELLRKFSETEKAENFPKKRSFLDKIKGFFSDFAV.

Residues D2–G67 enclose the J domain. The segment at G149–K227 adopts a CR-type zinc-finger fold. Positions 162, 165, 179, 182, 201, 204, 215, and 218 each coordinate Zn(2+). CXXCXGXG motif repeat units lie at residues C162 to G169, C179 to G186, C201 to G208, and C215 to G222.

Belongs to the DnaJ family. In terms of assembly, homodimer. The cofactor is Zn(2+).

It is found in the cytoplasm. Its function is as follows. Participates actively in the response to hyperosmotic and heat shock by preventing the aggregation of stress-denatured proteins and by disaggregating proteins, also in an autonomous, DnaK-independent fashion. Unfolded proteins bind initially to DnaJ; upon interaction with the DnaJ-bound protein, DnaK hydrolyzes its bound ATP, resulting in the formation of a stable complex. GrpE releases ADP from DnaK; ATP binding to DnaK triggers the release of the substrate protein, thus completing the reaction cycle. Several rounds of ATP-dependent interactions between DnaJ, DnaK and GrpE are required for fully efficient folding. Also involved, together with DnaK and GrpE, in the DNA replication of plasmids through activation of initiation proteins. This is Chaperone protein DnaJ from Chlamydia muridarum (strain MoPn / Nigg).